The primary structure comprises 161 residues: Zinc finger A20 and AN1 domain-containing stress-associated protein 4 (161 aa).

The A20-type zinc finger occupies 10 to 44 (PEGHRLCVNNCGFFGSSATMNLCSNCYGDLCLKQQ). Zn(2+) contacts are provided by Cys16, Cys20, Cys32, and Cys35. The span at 76 to 85 (TTKKTEEKKP) shows a compositional bias: basic and acidic residues. The interval 76 to 99 (TTKKTEEKKPIQIPTEQPSPPQRP) is disordered. An AN1-type zinc finger spans residues 96 to 142 (PQRPNRCTVCRKRVGLTGFMCRCGTTFCGSHRYPEVHGCTFDFKSAG). Zn(2+) contacts are provided by Cys102, Cys105, Cys116, Cys118, Cys123, His126, His132, and Cys134.

Its function is as follows. May be involved in environmental stress response. This chain is Zinc finger A20 and AN1 domain-containing stress-associated protein 4 (SAP4), found in Arabidopsis thaliana (Mouse-ear cress).